A 448-amino-acid chain; its full sequence is MSKTNARKPIYKSLYVQVLAAVTIGVLLGHFSPELGAQMKPLGDGFIKLIKMIIAPIIFCTVVIGIAGMEDMKKVGKTGGLALLYFEVMSTLALVIGLIVVNVLQPGSGMHIDPASLDTKSIAAYTAPGKMQGTVDFLLNVIPTSVVDAFAKGEILQVLLFSVLFGFALHRFGGRGTMVFDFIEKFSHVLFDIVGIIMKVAPIGAFGAMAFTIGKYGLGSLFSLGKLMGAFYLTCLIFVFVVLGIVSRLHGFSVFKFVRYIKEELLIVLGTSSSESVLPRMMEKLENLGARKSVVGLVIPTGYSFNLDGTSIYLTMAAVFIAQATDTPMSLTQQITLLAVLMLTSKGAAGITGSGFIVLAATLSAVGGVPVAGLALILGIDRFMSEARALTNLVGNGVATLVVAKWTGDLDMQRLHQGLDQPSLQESQEPEVILDQQVAHMAVAKSHG.

A run of 9 helical transmembrane segments spans residues 13 to 33, 49 to 69, 81 to 101, 149 to 169, 193 to 213, 227 to 247, 294 to 314, 335 to 355, and 357 to 377; these read SLYV…HFSP, LIKM…IAGM, LALL…LIVV, AFAK…GFAL, IVGI…AFTI, LMGA…GIVS, VVGL…SIYL, ITLL…TGSG, and IVLA…LALI.

Belongs to the dicarboxylate/amino acid:cation symporter (DAACS) (TC 2.A.23) family.

The protein resides in the cell inner membrane. Responsible for the transport of dicarboxylates such as succinate, fumarate, and malate from the periplasm across the membrane. In Polaromonas naphthalenivorans (strain CJ2), this protein is C4-dicarboxylate transport protein 2.